A 109-amino-acid chain; its full sequence is Protein phosphatase 1 regulatory subunit 1C (109 aa).

Positions 25–109 (AEQIRKRRPT…TNEREEQRDH (85 aa)) are disordered. A compositionally biased stretch (basic and acidic residues) spans 45–54 (NPPEIDDKRG). A compositionally biased stretch (polar residues) spans 55-75 (PNTQGELQNASPKQRKQSVYT). Positions 100–109 (TNEREEQRDH) are enriched in basic and acidic residues.

The protein belongs to the protein phosphatase inhibitor 1 family.

It is found in the cytoplasm. May increase cell susceptibility to TNF-induced apoptosis. In Homo sapiens (Human), this protein is Protein phosphatase 1 regulatory subunit 1C (PPP1R1C).